Here is a 108-residue protein sequence, read N- to C-terminus: Nitrogenase-stabilizing/protective protein NifW (108 aa).

The protein belongs to the NifW family. As to quaternary structure, homotrimer; associates with NifD.

In terms of biological role, may protect the nitrogenase Fe-Mo protein from oxidative damage. This is Nitrogenase-stabilizing/protective protein NifW from Zymomonas mobilis subsp. mobilis (strain ATCC 31821 / ZM4 / CP4).